A 329-amino-acid chain; its full sequence is IDS-like terpene synthase 1 (329 aa).

Mg(2+) is bound by residues D79 and D83.

This sequence belongs to the FPP/GGPP synthase family. It depends on Mg(2+) as a cofactor.

The enzyme catalyses (2E)-geranyl diphosphate + H2O = linalool + diphosphate. It catalyses the reaction (2E,6E)-farnesyl diphosphate + H2O = (6E)-nerolidol + diphosphate. Terpene synthase that shows monoterpene synthase activity and produces linalool, using geranyl diphosphate (GPP) as substrate. Also shows sesquiterpene synthase activity as it is able to convert farnesyl diphosphate (FPP) into (E)-nerolidol. The polypeptide is IDS-like terpene synthase 1 (Melampsora lini (Rust fungus)).